We begin with the raw amino-acid sequence, 450 residues long: UDP-N-acetylmuramoylalanine--D-glutamate ligase (450 aa).

Position 119 to 125 (119 to 125 (GSNGKTT)) interacts with ATP.

This sequence belongs to the MurCDEF family.

Its subcellular location is the cytoplasm. The enzyme catalyses UDP-N-acetyl-alpha-D-muramoyl-L-alanine + D-glutamate + ATP = UDP-N-acetyl-alpha-D-muramoyl-L-alanyl-D-glutamate + ADP + phosphate + H(+). It functions in the pathway cell wall biogenesis; peptidoglycan biosynthesis. Its function is as follows. Cell wall formation. Catalyzes the addition of glutamate to the nucleotide precursor UDP-N-acetylmuramoyl-L-alanine (UMA). This is UDP-N-acetylmuramoylalanine--D-glutamate ligase from Bacillus mycoides (strain KBAB4) (Bacillus weihenstephanensis).